The sequence spans 447 residues: N-succinylarginine dihydrolase (447 aa).

Residues 19-28, Asn-110, and 137-138 each bind substrate; these read AGLSFGNEAS and HR. Glu-174 is an active-site residue. Residue Arg-212 coordinates substrate. His-248 is an active-site residue. Asp-250 and Asn-359 together coordinate substrate. The active-site Nucleophile is Cys-365.

The protein belongs to the succinylarginine dihydrolase family. In terms of assembly, homodimer.

It catalyses the reaction N(2)-succinyl-L-arginine + 2 H2O + 2 H(+) = N(2)-succinyl-L-ornithine + 2 NH4(+) + CO2. It functions in the pathway amino-acid degradation; L-arginine degradation via AST pathway; L-glutamate and succinate from L-arginine: step 2/5. In terms of biological role, catalyzes the hydrolysis of N(2)-succinylarginine into N(2)-succinylornithine, ammonia and CO(2). In Salmonella agona (strain SL483), this protein is N-succinylarginine dihydrolase.